Here is a 321-residue protein sequence, read N- to C-terminus: Lipoyl synthase (321 aa).

[4Fe-4S] cluster is bound by residues Cys-68, Cys-73, Cys-79, Cys-94, Cys-98, Cys-101, and Ser-308. The region spanning 80 to 297 (FNHGTATFMI…KAEALAMGFT (218 aa)) is the Radical SAM core domain.

It belongs to the radical SAM superfamily. Lipoyl synthase family. Requires [4Fe-4S] cluster as cofactor.

It localises to the cytoplasm. The enzyme catalyses [[Fe-S] cluster scaffold protein carrying a second [4Fe-4S](2+) cluster] + N(6)-octanoyl-L-lysyl-[protein] + 2 oxidized [2Fe-2S]-[ferredoxin] + 2 S-adenosyl-L-methionine + 4 H(+) = [[Fe-S] cluster scaffold protein] + N(6)-[(R)-dihydrolipoyl]-L-lysyl-[protein] + 4 Fe(3+) + 2 hydrogen sulfide + 2 5'-deoxyadenosine + 2 L-methionine + 2 reduced [2Fe-2S]-[ferredoxin]. It functions in the pathway protein modification; protein lipoylation via endogenous pathway; protein N(6)-(lipoyl)lysine from octanoyl-[acyl-carrier-protein]: step 2/2. Its function is as follows. Catalyzes the radical-mediated insertion of two sulfur atoms into the C-6 and C-8 positions of the octanoyl moiety bound to the lipoyl domains of lipoate-dependent enzymes, thereby converting the octanoylated domains into lipoylated derivatives. This is Lipoyl synthase from Escherichia coli O9:H4 (strain HS).